The following is a 261-amino-acid chain: Cobalt transport protein CbiM (261 aa).

Residues 1 to 33 (MLRRVLASKRASLILMGMLSFYIIVSASAPAYA) form the signal peptide. Helical transmembrane passes span 41–61 (LPAG…LLGV), 76–96 (LLLA…LPSV), 108–128 (LGSV…VLLF), 140–160 (TLGA…YWIY), 172–192 (IAIF…TSVQ), 197–217 (FPAP…IFAI), and 220–240 (IPLA…LQSY).

The protein belongs to the CbiM family. In terms of assembly, forms an energy-coupling factor (ECF) transporter complex composed of an ATP-binding protein (A component, CbiO), a transmembrane protein (T component, CbiQ) and 2 possible substrate-capture proteins (S components, CbiM and CbiN) of unknown stoichimetry.

It is found in the cell inner membrane. Its pathway is cofactor biosynthesis; adenosylcobalamin biosynthesis. In terms of biological role, part of the energy-coupling factor (ECF) transporter complex CbiMNOQ involved in cobalt import. This is Cobalt transport protein CbiM from Nostoc sp. (strain PCC 7120 / SAG 25.82 / UTEX 2576).